A 546-amino-acid polypeptide reads, in one-letter code: 5'-nucleotidase domain-containing protein 3 (546 aa).

The Nucleophile role is filled by Asp100. Mg(2+) contacts are provided by Asp100 and Asp102. Catalysis depends on Asp102, which acts as the Proton donor. Residue 249-257 (KDSIRDVHI) participates in substrate binding. Asp387 serves as a coordination point for Mg(2+).

The protein belongs to the 5'(3')-deoxyribonucleotidase family. Mg(2+) is required as a cofactor.

The chain is 5'-nucleotidase domain-containing protein 3 (Nt5dc3) from Mus musculus (Mouse).